Consider the following 72-residue polypeptide: Translation initiation factor IF-1 (72 aa).

An S1-like domain is found at 1–72 (MAKEESIEIE…SKGRITYRYK (72 aa)).

It belongs to the IF-1 family. In terms of assembly, component of the 30S ribosomal translation pre-initiation complex which assembles on the 30S ribosome in the order IF-2 and IF-3, IF-1 and N-formylmethionyl-tRNA(fMet); mRNA recruitment can occur at any time during PIC assembly.

It is found in the cytoplasm. Its function is as follows. One of the essential components for the initiation of protein synthesis. Stabilizes the binding of IF-2 and IF-3 on the 30S subunit to which N-formylmethionyl-tRNA(fMet) subsequently binds. Helps modulate mRNA selection, yielding the 30S pre-initiation complex (PIC). Upon addition of the 50S ribosomal subunit IF-1, IF-2 and IF-3 are released leaving the mature 70S translation initiation complex. This chain is Translation initiation factor IF-1, found in Chlorobium phaeovibrioides (strain DSM 265 / 1930) (Prosthecochloris vibrioformis (strain DSM 265)).